Consider the following 317-residue polypeptide: Apolipoprotein E (317 aa).

The first 18 residues, 1-18, serve as a signal peptide directing secretion; it reads MKVLWAALLVTFLAGCQA. 8 consecutive repeat copies span residues 80–101, 102–123, 124–145, 146–167, 168–189, 190–211, 212–233, and 234–255. The interval 80–255 is 8 X 22 AA approximate tandem repeats; that stretch reads TLMDETMKEL…RLDEVKEQVA (176 aa). M143 bears the Methionine sulfoxide mark. Residue S147 is modified to Phosphoserine. The tract at residues 158–168 is LDL and other lipoprotein receptors binding; the sequence is HLRKLRKRLLR. 162-165 provides a ligand contact to heparin; the sequence is LRKR. A lipid-binding and lipoprotein association region spans residues 210–290; that stretch reads AATVGSLAGQ…SWFEPLVEDM (81 aa). T212 carries O-linked (GalNAc...) threonine glycosylation. Residue 229–236 coordinates heparin; that stretch reads GERLRARM. Residues 266-317 are homooligomerization; that stretch reads QQISLQAEAFQARLKSWFEPLVEDMQRQWAGLVEKVQAAVGASTAPVPSDNH. The specificity for association with VLDL stretch occupies residues 278–290; that stretch reads RLKSWFEPLVEDM.

This sequence belongs to the apolipoprotein A1/A4/E family. Homotetramer. May interact with ABCA1; functionally associated with ABCA1 in the biogenesis of HDLs. May interact with APP/A4 amyloid-beta peptide; the interaction is extremely stable in vitro but its physiological significance is unclear. May interact with MAPT. May interact with MAP2. In the cerebrospinal fluid, interacts with secreted SORL1. Interacts with PMEL; this allows the loading of PMEL luminal fragment on ILVs to induce fibril nucleation. Post-translationally, APOE exists as multiple glycosylated and sialylated glycoforms within cells and in plasma. The extent of glycosylation and sialylation are tissue and context specific. Glycated in plasma VLDL. In terms of processing, phosphorylated by FAM20C in the extracellular medium.

The protein localises to the secreted. The protein resides in the extracellular space. It localises to the extracellular matrix. Its subcellular location is the extracellular vesicle. It is found in the endosome. The protein localises to the multivesicular body. In terms of biological role, APOE is an apolipoprotein, a protein associating with lipid particles, that mainly functions in lipoprotein-mediated lipid transport between organs via the plasma and interstitial fluids. APOE is a core component of plasma lipoproteins and is involved in their production, conversion and clearance. Apolipoproteins are amphipathic molecules that interact both with lipids of the lipoprotein particle core and the aqueous environment of the plasma. As such, APOE associates with chylomicrons, chylomicron remnants, very low density lipoproteins (VLDL) and intermediate density lipoproteins (IDL) but shows a preferential binding to high-density lipoproteins (HDL). It also binds a wide range of cellular receptors including the LDL receptor/LDLR, the LDL receptor-related proteins LRP1, LRP2 and LRP8 and the very low-density lipoprotein receptor/VLDLR that mediate the cellular uptake of the APOE-containing lipoprotein particles. Finally, APOE also has a heparin-binding activity and binds heparan-sulfate proteoglycans on the surface of cells, a property that supports the capture and the receptor-mediated uptake of APOE-containing lipoproteins by cells. A main function of APOE is to mediate lipoprotein clearance through the uptake of chylomicrons, VLDLs, and HDLs by hepatocytes. APOE is also involved in the biosynthesis by the liver of VLDLs as well as their uptake by peripheral tissues ensuring the delivery of triglycerides and energy storage in muscle, heart and adipose tissues. By participating in the lipoprotein-mediated distribution of lipids among tissues, APOE plays a critical role in plasma and tissues lipid homeostasis. APOE is also involved in two steps of reverse cholesterol transport, the HDLs-mediated transport of cholesterol from peripheral tissues to the liver, and thereby plays an important role in cholesterol homeostasis. First, it is functionally associated with ABCA1 in the biogenesis of HDLs in tissues. Second, it is enriched in circulating HDLs and mediates their uptake by hepatocytes. APOE also plays an important role in lipid transport in the central nervous system, regulating neuron survival and sprouting. The sequence is that of Apolipoprotein E (APOE) from Rhinopithecus roxellana (Golden snub-nosed monkey).